The chain runs to 189 residues: Threonylcarbamoyl-AMP synthase (189 aa).

The region spanning 7-189 (NPRVNYAANM…LLTGQVVRPS (183 aa)) is the YrdC-like domain.

This sequence belongs to the SUA5 family. TsaC subfamily.

The protein localises to the cytoplasm. The enzyme catalyses L-threonine + hydrogencarbonate + ATP = L-threonylcarbamoyladenylate + diphosphate + H2O. Functionally, required for the formation of a threonylcarbamoyl group on adenosine at position 37 (t(6)A37) in tRNAs that read codons beginning with adenine. Catalyzes the conversion of L-threonine, HCO(3)(-)/CO(2) and ATP to give threonylcarbamoyl-AMP (TC-AMP) as the acyladenylate intermediate, with the release of diphosphate. The polypeptide is Threonylcarbamoyl-AMP synthase (Cellvibrio japonicus (strain Ueda107) (Pseudomonas fluorescens subsp. cellulosa)).